The following is a 429-amino-acid chain: Adenylosuccinate synthetase (429 aa).

GTP-binding positions include 12–18 and 40–42; these read GDEGKGK and GHT. The Proton acceptor role is filled by Asp13. Residues Asp13 and Gly40 each contribute to the Mg(2+) site. IMP is bound by residues 13 to 16, 38 to 41, Thr128, Arg142, Gln223, Thr238, and Arg302; these read DEGK and NAGH. The Proton donor role is filled by His41. A substrate-binding site is contributed by 298 to 304; that stretch reads TVTGRPR. Residues Arg304, 330–332, and 412–414 each bind GTP; these read LLD and SVG.

This sequence belongs to the adenylosuccinate synthetase family. Homodimer. The cofactor is Mg(2+).

Its subcellular location is the cytoplasm. The catalysed reaction is IMP + L-aspartate + GTP = N(6)-(1,2-dicarboxyethyl)-AMP + GDP + phosphate + 2 H(+). It functions in the pathway purine metabolism; AMP biosynthesis via de novo pathway; AMP from IMP: step 1/2. In terms of biological role, plays an important role in the de novo pathway of purine nucleotide biosynthesis. Catalyzes the first committed step in the biosynthesis of AMP from IMP. The protein is Adenylosuccinate synthetase of Lactobacillus helveticus (strain DPC 4571).